Consider the following 520-residue polypeptide: O-methyltransferase cicE (520 aa).

Residues 300–301 (GG), Asp323, 355–356 (NF), and Arg371 contribute to the S-adenosyl-L-methionine site.

This sequence belongs to the class I-like SAM-binding methyltransferase superfamily. Cation-independent O-methyltransferase family.

It participates in phytotoxin biosynthesis. Functionally, O-methyltransferase; part of the gene cluster that mediates the biosynthesis of cichorine, a phytotoxin active against knapweed, corn, and soybeans. The first step in the pathway is performed by the non-reducing polyketide synthase pkbA that condenses one acetyl-CoA starter unit with 3 malonyl-CoA units. PkbA also catalyzes one methylation step to produce 3-methylorsellinate. The nonribosomal peptide synthase-like protein cicB, the cytochrome P450 monooxygenase cicH and the O-methyltransferase cicE are involved in the conversion of 3-methylorsellinate into nidulol. CicB converts 3-methylorsellinate to a yet unidentified intermediate, cicH may play a ring-closing role for cichorine and cicE is plausibly responsible for the methylation of one of the phenol groups. The oxidoreductase cicC acts downstream with still unidentified enzymes to further convert nidulol into cichorine. The chain is O-methyltransferase cicE from Emericella nidulans (strain FGSC A4 / ATCC 38163 / CBS 112.46 / NRRL 194 / M139) (Aspergillus nidulans).